A 305-amino-acid polypeptide reads, in one-letter code: Chromatin modification-related protein png2 (305 aa).

The disordered stretch occupies residues 135–239 (TVTPQTSERR…PLVKHDTLDS (105 aa)). Low complexity predominate over residues 153–167 (NQHSQQYSSQERSSS). Polar residues-rich tracts occupy residues 168–183 (YNNFEDASSPQSSYHT) and 195–210 (KSSSPPLSSTKHAPQS). Tyr-181 is modified (phosphotyrosine). Thr-183 carries the phosphothreonine modification. Residues Ser-197 and Ser-198 each carry the phosphoserine modification. Basic and acidic residues predominate over residues 211–223 (TERRPVRRSESRL). A PHD-type zinc finger spans residues 248–297 (QLYCYCQQVSYGQMIGCDNENCKREWFHLPCVGLVEPPKGIWYCKECEEL). Residues Cys-251, Cys-253, Cys-264, Cys-269, His-275, Cys-278, Cys-291, and Cys-294 each contribute to the Zn(2+) site.

The protein belongs to the ING family. As to quaternary structure, interacts with H3K4me3 and to a lesser extent with H3K4me2. Component of the clr6 histone deacetylase complex I'composed of at least clr6, png2, prw1, pst1 and sds3.

Its subcellular location is the cytoplasm. The protein resides in the nucleus. Component of the clr6 histone deacetylase complex I' responsible for the deacetylation of lysine residues on the N-terminal part of the core histones (H2A, H2B, H3 and H4). Histone deacetylation gives a tag for epigenetic repression and plays an important role in transcriptional regulation, cell cycle progression and developmental events. Has a role in silencing of mating type genes. This chain is Chromatin modification-related protein png2 (png2), found in Schizosaccharomyces pombe (strain 972 / ATCC 24843) (Fission yeast).